The sequence spans 456 residues: RuvB-like helicase 1 (456 aa).

70–77 (GPPGTGKT) provides a ligand contact to ATP.

Belongs to the RuvB family. As to quaternary structure, forms homohexameric rings. May form a dodecamer with rept made of two stacked hexameric rings. Component of the chromatin remodeling Ino80 complex. Interacts with Myc and rept. In terms of tissue distribution, higher expression occurs in primordia of mesoderm, anterior and posterior midgut and cephalic furrow early in gastrulation, as well as in endoderm and mesoderm lineages during germ band extension. Later in development expression is only maintained in endoderm cells. Expressed in thoracic and abdominal segment neural precursors of all embryonic chordotonal organs.

It is found in the nucleus. The catalysed reaction is ATP + H2O = ADP + phosphate + H(+). Functionally, acts as a transcriptional coactivator in Wg signaling caused by altered arm signaling. Pont and rept interfere antagonistically with nuclear arm signaling function, and are required to enhance or reduce arm activity, respectively. Also an essential cofactor for the normal function of Myc; required for cellular proliferation and growth. In terms of biological role, proposed core component of the chromatin remodeling Ino80 complex which is involved in transcriptional regulation, DNA replication and probably DNA repair. This chain is RuvB-like helicase 1, found in Drosophila melanogaster (Fruit fly).